A 59-amino-acid polypeptide reads, in one-letter code: Embryonic testis differentiation protein homolog C (59 aa).

Residues 1 to 22 (MDKELPKASPSEPALNIKKSGK) are disordered.

The protein is Embryonic testis differentiation protein homolog C of Homo sapiens (Human).